The chain runs to 423 residues: Testican-2 (423 aa).

The N-terminal stretch at 1–22 is a signal peptide; the sequence is MRAPGSGRLALPLLLLAVVALA. Ser72 carries the post-translational modification Phosphoserine. 5 cysteine pairs are disulfide-bonded: Cys90–Cys101, Cys95–Cys111, Cys136–Cys166, Cys139–Cys159, and Cys148–Cys180. The region spanning 130–182 is the Kazal-like domain; it reads GGKDSVCKPCHMAQLASVCGSDGHTYSSVCKLEQQACLSSKQLAVRCEGPCPC. Asn225 carries an N-linked (GlcNAc...) asparagine glycan. The region spanning 309 to 375 is the Thyroglobulin type-1 domain; the sequence is KPPCLAELER…GTRMHGTPDC (67 aa). Cystine bridges form between Cys312–Cys336, Cys347–Cys354, and Cys356–Cys375. 2 O-linked (Xyl...) (glycosaminoglycan) serine glycosylation sites follow: Ser382 and Ser387. The tract at residues 387–423 is disordered; that stretch reads SGVGWEDEEEKETEEAGEEAEEEEGEAGEADDGGYIW. The segment covering 391 to 423 has biased composition (acidic residues); sequence WEDEEEKETEEAGEEAEEEEGEAGEADDGGYIW.

Post-translationally, O-glycosylated; contains chondroitin sulfate and heparan sulfate. In terms of tissue distribution, brain specific.

The protein resides in the secreted. It is found in the extracellular space. It localises to the extracellular matrix. Functionally, may participate in diverse steps of neurogenesis. Binds calcium. The sequence is that of Testican-2 (Spock2) from Mus musculus (Mouse).